We begin with the raw amino-acid sequence, 328 residues long: Phenylalanine--tRNA ligase alpha subunit (328 aa).

Belongs to the class-II aminoacyl-tRNA synthetase family. Phe-tRNA synthetase alpha subunit type 1 subfamily. As to quaternary structure, tetramer of two alpha and two beta subunits. Mg(2+) is required as a cofactor.

It localises to the cytoplasm. The enzyme catalyses tRNA(Phe) + L-phenylalanine + ATP = L-phenylalanyl-tRNA(Phe) + AMP + diphosphate + H(+). The protein is Phenylalanine--tRNA ligase alpha subunit of Buchnera aphidicola subsp. Baizongia pistaciae (strain Bp).